A 258-amino-acid polypeptide reads, in one-letter code: Thiamine thiazole synthase (258 aa).

NAD(+) is bound by residues S36, 55–56, G63, V127, and 153–155; these read ER and HVD. The Fe cation site is built by D155 and H170. Residue M224 coordinates NAD(+). Glycine is bound at residue R234.

This sequence belongs to the THI4 family. Homooctamer; tetramer of dimers. Requires Fe(2+) as cofactor.

The enzyme catalyses hydrogen sulfide + glycine + NAD(+) = ADP-5-ethyl-4-methylthiazole-2-carboxylate + nicotinamide + 3 H2O + H(+). It functions in the pathway cofactor biosynthesis; thiamine diphosphate biosynthesis. Its function is as follows. Involved in the biosynthesis of the thiazole moiety of thiamine. Catalyzes the conversion of NAD and glycine to adenosine diphosphate 5-(2-hydroxyethyl)-4-methylthiazole-2-carboxylate (ADT), an adenylated thiazole intermediate, using free sulfide as a source of sulfur. The protein is Thiamine thiazole synthase of Desulfosudis oleivorans (strain DSM 6200 / JCM 39069 / Hxd3) (Desulfococcus oleovorans).